The sequence spans 1323 residues: Traf2 and NCK-interacting protein kinase (1323 aa).

Residues 25-289 enclose the Protein kinase domain; it reads FELVELVGNG…TEQLMKHPFI (265 aa). Residues 31 to 39 and Lys54 contribute to the ATP site; that span reads VGNGTYGQV. Catalysis depends on Asp153, which acts as the Proton acceptor. Thr187 is subject to Phosphothreonine. Disordered stretches follow at residues 284-347, 397-559, and 571-838; these read MKHP…LPGE, EQKE…LRPV, and SQGP…NEQY. Residues 288 to 307 are compositionally biased toward basic and acidic residues; the sequence is FIRDQPNERQVRIQLKDHID. Positions 290–1010 are mediates interaction with NEDD4; that stretch reads RDQPNERQVR…EIRKYKKRFN (721 aa). The segment covering 317 to 335 has biased composition (acidic residues); sequence DETEYEYSGSEEEEEENDS. Phosphoserine occurs at positions 324 and 326. 3 stretches are compositionally biased toward basic and acidic residues: residues 397 to 470, 477 to 494, and 503 to 513; these read EQKE…ERDY, QRQE…HYKE, and AWAKEVEERSR. Ser531 and Ser541 each carry phosphoserine. At Thr552 the chain carries Phosphothreonine. Phosphoserine occurs at positions 571, 579, 581, and 611. Residues 623–640 show a composition bias toward basic and acidic residues; the sequence is RIEKFDRSSWLRQEEDIP. A phosphoserine mark is found at Ser649, Ser651, Ser659, Ser672, Ser678, Ser691, Ser735, Ser737, and Ser740. The segment covering 691–726 has biased composition (low complexity); the sequence is SSLQRTSSGSSSSSSTPSSQPSSQGGSQPGSQAGSS. 2 stretches are compositionally biased toward basic and acidic residues: residues 746–760 and 772–790; these read EPSK…DITR and KELR…KKVT. Acidic residues predominate over residues 797–810; that stretch reads EESESSEEEEEDGE. Phosphoserine is present on Ser922. The tract at residues 939-960 is disordered; the sequence is FVDPRVYQTSPTDEDEEDDESS. A compositionally biased stretch (acidic residues) spans 950 to 959; that stretch reads TDEDEEDDES. Positions 1010–1297 constitute a CNH domain; the sequence is NSEILCAALW…KFLCERNDKV (288 aa).

Belongs to the protein kinase superfamily. STE Ser/Thr protein kinase family. STE20 subfamily. In terms of assembly, interacts (via the CNH domain) with RAP2A (GTP-bound form preferentially); the interaction is direct and required for the activation of TNIK by RAP2A. Interacts with NEDD4; recruits RAP2A to NEDD4. Interacts with TRAF2 and NCK. Interacts with TCF7L2/TCF4 and CTNNB1; the interaction is direct. Interacts with TANC1. Autophosphorylated. Autophosphorylation is activated by RAP2A and induces association to the cytoskeletal fraction.

Its subcellular location is the nucleus. It is found in the cytoplasm. The protein resides in the recycling endosome. It localises to the cytoskeleton. It carries out the reaction L-seryl-[protein] + ATP = O-phospho-L-seryl-[protein] + ADP + H(+). The catalysed reaction is L-threonyl-[protein] + ATP = O-phospho-L-threonyl-[protein] + ADP + H(+). Functionally, serine/threonine kinase that acts as an essential activator of the Wnt signaling pathway. Recruited to promoters of Wnt target genes and required to activate their expression. May act by phosphorylating TCF4/TCF7L2. Appears to act upstream of the JUN N-terminal pathway. May play a role in the response to environmental stress. Part of a signaling complex composed of NEDD4, RAP2A and TNIK which regulates neuronal dendrite extension and arborization during development. More generally, it may play a role in cytoskeletal rearrangements and regulate cell spreading. Phosphorylates SMAD1 on Thr-322. Activator of the Hippo signaling pathway which plays a pivotal role in organ size control and tumor suppression by restricting proliferation and promoting apoptosis. MAP4Ks act in parallel to and are partially redundant with STK3/MST2 and STK4/MST2 in the phosphorylation and activation of LATS1/2, and establish MAP4Ks as components of the expanded Hippo pathway. The sequence is that of Traf2 and NCK-interacting protein kinase (Tnik) from Mus musculus (Mouse).